The primary structure comprises 251 residues: Hydroxyacylglutathione hydrolase (251 aa).

Zn(2+) is bound by residues His53, His55, Asp57, His58, His110, Asp127, and His165.

The protein belongs to the metallo-beta-lactamase superfamily. Glyoxalase II family. Monomer. The cofactor is Zn(2+).

It carries out the reaction an S-(2-hydroxyacyl)glutathione + H2O = a 2-hydroxy carboxylate + glutathione + H(+). It participates in secondary metabolite metabolism; methylglyoxal degradation; (R)-lactate from methylglyoxal: step 2/2. Functionally, thiolesterase that catalyzes the hydrolysis of S-D-lactoyl-glutathione to form glutathione and D-lactic acid. The sequence is that of Hydroxyacylglutathione hydrolase from Buchnera aphidicola subsp. Acyrthosiphon pisum (strain APS) (Acyrthosiphon pisum symbiotic bacterium).